The primary structure comprises 313 residues: tRNA (guanine-N(7)-)-methyltransferase (313 aa).

Residues Glu-33, Glu-58, and Asp-85 each coordinate S-adenosyl-L-methionine. Substrate-binding positions include Lys-112, Asp-144, and 177–180; that span reads TRYE.

The protein belongs to the class I-like SAM-binding methyltransferase superfamily. TrmB family.

It carries out the reaction guanosine(46) in tRNA + S-adenosyl-L-methionine = N(7)-methylguanosine(46) in tRNA + S-adenosyl-L-homocysteine. Its pathway is tRNA modification; N(7)-methylguanine-tRNA biosynthesis. Functionally, catalyzes the formation of N(7)-methylguanine at position 46 (m7G46) in tRNA. This chain is tRNA (guanine-N(7)-)-methyltransferase, found in Thermotoga maritima (strain ATCC 43589 / DSM 3109 / JCM 10099 / NBRC 100826 / MSB8).